The chain runs to 175 residues: NAD(P)H-quinone oxidoreductase subunit J (175 aa).

This sequence belongs to the complex I 30 kDa subunit family. In terms of assembly, NDH-1 can be composed of about 15 different subunits; different subcomplexes with different compositions have been identified which probably have different functions.

Its subcellular location is the cellular thylakoid membrane. The enzyme catalyses a plastoquinone + NADH + (n+1) H(+)(in) = a plastoquinol + NAD(+) + n H(+)(out). The catalysed reaction is a plastoquinone + NADPH + (n+1) H(+)(in) = a plastoquinol + NADP(+) + n H(+)(out). Its function is as follows. NDH-1 shuttles electrons from an unknown electron donor, via FMN and iron-sulfur (Fe-S) centers, to quinones in the respiratory and/or the photosynthetic chain. The immediate electron acceptor for the enzyme in this species is believed to be plastoquinone. Couples the redox reaction to proton translocation, and thus conserves the redox energy in a proton gradient. Cyanobacterial NDH-1 also plays a role in inorganic carbon-concentration. This Trichormus variabilis (strain ATCC 29413 / PCC 7937) (Anabaena variabilis) protein is NAD(P)H-quinone oxidoreductase subunit J.